Here is a 267-residue protein sequence, read N- to C-terminus: MSNILNKIVATKKIEVANRLKQVSLANQRAQAEANNQDVLLKPRGFIQAIEKKITAGKAAVITEIKKASPSRGILRELFVPTDIAQSYEKHGAACLSVLTDADYFQGCNDYLQQARAACSIPVLRKDFTIDPYQVYEARAIGADAILLIVAYLELNQMKDLEACANELGLDVLVEVHNASELEQALELKTPLLGINNRNLKTFEVTLQNTLSLLSMVPNDKTLVTESGILSHTDVQLMRDHHVNAFLVGEAFMRAADPGAALSELFS.

It belongs to the TrpC family.

It carries out the reaction 1-(2-carboxyphenylamino)-1-deoxy-D-ribulose 5-phosphate + H(+) = (1S,2R)-1-C-(indol-3-yl)glycerol 3-phosphate + CO2 + H2O. It participates in amino-acid biosynthesis; L-tryptophan biosynthesis; L-tryptophan from chorismate: step 4/5. This Polynucleobacter necessarius subsp. necessarius (strain STIR1) protein is Indole-3-glycerol phosphate synthase.